Reading from the N-terminus, the 286-residue chain is Beta-lactamase SHV-3 (286 aa).

Positions 1–21 (MRYIRLCIISLLATLPLAVHA) are cleaved as a signal peptide. Ser66 functions as the Acyl-ester intermediate in the catalytic mechanism. A disulfide bridge links Cys73 with Cys119. Catalysis depends on Glu164, which acts as the Proton acceptor. 230 to 232 (KTG) lines the substrate pocket.

Belongs to the class-A beta-lactamase family.

The catalysed reaction is a beta-lactam + H2O = a substituted beta-amino acid. Its function is as follows. This enzyme hydrolyzes cefotaxime, ceftazidime and other broad spectrum cephalosporins. The polypeptide is Beta-lactamase SHV-3 (bla) (Klebsiella pneumoniae).